Here is a 117-residue protein sequence, read N- to C-terminus: Large ribosomal subunit protein bL17 (117 aa).

This sequence belongs to the bacterial ribosomal protein bL17 family. In terms of assembly, part of the 50S ribosomal subunit. Contacts protein L32.

This Campylobacter lari (strain RM2100 / D67 / ATCC BAA-1060) protein is Large ribosomal subunit protein bL17.